The primary structure comprises 300 residues: ADP-polyphosphate phosphotransferase 1 (300 aa).

Belongs to the polyphosphate kinase 2 (PPK2) family. Class I subfamily. As to quaternary structure, homotetramer. Mg(2+) serves as cofactor.

It catalyses the reaction [phosphate](n) + ATP = [phosphate](n+1) + ADP. It carries out the reaction [phosphate](n) + GTP = [phosphate](n+1) + GDP. Functionally, uses inorganic polyphosphate (polyP) as a donor to convert ADP to ATP. Can also convert GDP to GTP, with lower efficiency. Cannot dephosphorylate ATP in the presence of polyP. This is ADP-polyphosphate phosphotransferase 1 from Rhizobium meliloti (strain 1021) (Ensifer meliloti).